Here is a 184-residue protein sequence, read N- to C-terminus: Peptidyl-tRNA hydrolase (184 aa).

A tRNA-binding site is contributed by Y14. The active-site Proton acceptor is H19. TRNA is bound by residues F60 and N62.

It belongs to the PTH family. As to quaternary structure, monomer.

It is found in the cytoplasm. It carries out the reaction an N-acyl-L-alpha-aminoacyl-tRNA + H2O = an N-acyl-L-amino acid + a tRNA + H(+). Its function is as follows. Hydrolyzes ribosome-free peptidyl-tRNAs (with 1 or more amino acids incorporated), which drop off the ribosome during protein synthesis, or as a result of ribosome stalling. Catalyzes the release of premature peptidyl moieties from peptidyl-tRNA molecules trapped in stalled 50S ribosomal subunits, and thus maintains levels of free tRNAs and 50S ribosomes. The protein is Peptidyl-tRNA hydrolase of Mesomycoplasma hyopneumoniae (strain 7448) (Mycoplasma hyopneumoniae).